The primary structure comprises 413 residues: MNFLPFLIAKRLYHRNNKNHAVLLVSILSKIGISISIFTLILSFSALNGFQILIKKNILSSLPHGIIELTNTSAFTWKDITKKLESLPEVIYSEPYVLMNSVLLKNDKMRFINIKSFKNIKYIKKYFSFQKKLYNFSKLKKIYNNEIIISSDLAKYFSLKEGDCINLIILNKKISFDKTQIQSFSFKVKSIFHSNGISNSNIGLIPFIFFQKFFNIKNNINKIELYMSDPFQADKIILKIAKKIKTPLFFYNWMYSYKYIYHDIKIIKTIIYVTLFLIIIISCFSVISICLTSISKKTKDIAILRSIGANNILIQLIFFYYGMRFIIIGNLIGLLTGIITVLNFKKIMFFLEKHFEENWFLKNVYYKNFLLLQINFFDLIIIFISTLTIGIVANWYPIYYASKINPNKILKEY.

Helical transmembrane passes span 22-42 (VLLV…TLIL), 270-290 (IIYV…ISIC), 312-332 (ILIQ…GNLI), and 379-399 (LIII…YPIY).

This sequence belongs to the ABC-4 integral membrane protein family. LolC/E subfamily.

Its subcellular location is the cell membrane. This is an uncharacterized protein from Buchnera aphidicola subsp. Schizaphis graminum (strain Sg).